We begin with the raw amino-acid sequence, 823 residues long: Ubiquitin carboxyl-terminal hydrolase 16 (823 aa).

A UBP-type zinc finger spans residues 22 to 142; sequence PVCRHIRKGL…QVVDYVRKQA (121 aa). Zn(2+) contacts are provided by cysteine 24, histidine 26, cysteine 48, cysteine 51, cysteine 74, cysteine 77, cysteine 82, histidine 90, histidine 94, histidine 103, cysteine 116, and cysteine 119. Lysine 140 is covalently cross-linked (Glycyl lysine isopeptide (Lys-Gly) (interchain with G-Cter in SUMO2)). The disordered stretch occupies residues 146–189; the sequence is TPKPAEKDNGNIELENKKLEKESKNEQEREKKENMAKENPPMNS. The span at 149–181 shows a compositional bias: basic and acidic residues; sequence PAEKDNGNIELENKKLEKESKNEQEREKKENMA. Serine 189 carries the post-translational modification Phosphoserine. The 627-residue stretch at 196 to 822 folds into the USP domain; it reads KGLSNLGNTC…QAYLLFYERI (627 aa). Cysteine 205 acts as the Nucleophile in catalysis. Residues 394-408 are compositionally biased toward basic and acidic residues; sequence SGKKSVNDKNLKKTV. A disordered region spans residues 394–460; that stretch reads SGKKSVNDKN…AKNQRRQQKI (67 aa). Over residues 409 to 420 the composition is skewed to acidic residues; that stretch reads EDEDQDSEEEKD. Position 415 is a phosphoserine (serine 415). A compositionally biased stretch (basic and acidic residues) spans 421–430; that stretch reads NDSYIKERSD. Residues 438 to 458 show a composition bias toward basic residues; it reads HLQKKAKKQAKKQAKNQRRQQ. 2 positions are modified to phosphoserine: serine 531 and serine 552. Threonine 554 carries the phosphothreonine modification. Catalysis depends on histidine 758, which acts as the Proton acceptor.

It belongs to the peptidase C19 family. USP16 subfamily. Homotetramer. Associates with late pre-40S ribosomes. Interacts with CEP78; promoting deubiquitination of tektins. In terms of processing, phosphorylated at the onset of mitosis and dephosphorylated during the metaphase/anaphase transition. Phosphorylation by AURKB enhances the deubiquitinase activity. In terms of tissue distribution, present in all the tissues examined including fetal brain, lung, liver, kidney, and adult heart, brain, placenta, lung, liver, skeletal muscle, kidney and pancreas.

It is found in the nucleus. The protein localises to the cytoplasm. The catalysed reaction is Thiol-dependent hydrolysis of ester, thioester, amide, peptide and isopeptide bonds formed by the C-terminal Gly of ubiquitin (a 76-residue protein attached to proteins as an intracellular targeting signal).. In terms of biological role, specifically deubiquitinates 'Lys-120' of histone H2A (H2AK119Ub), a specific tag for epigenetic transcriptional repression, thereby acting as a coactivator. Deubiquitination of histone H2A is a prerequisite for subsequent phosphorylation at 'Ser-11' of histone H3 (H3S10ph), and is required for chromosome segregation when cells enter into mitosis. In resting B- and T-lymphocytes, phosphorylation by AURKB leads to enhance its activity, thereby maintaining transcription in resting lymphocytes. Regulates Hox gene expression via histone H2A deubiquitination. Prefers nucleosomal substrates. Does not deubiquitinate histone H2B. Also deubiquitinates non-histone proteins, such as ribosomal protein RPS27A: deubiquitination of monoubiquitinated RPS27A promotes maturation of the 40S ribosomal subunit. Also mediates deubiquitination of tektin proteins (TEKT1, TEKT2, TEK3, TEKT4 and TEKT5), promoting their stability. The sequence is that of Ubiquitin carboxyl-terminal hydrolase 16 from Homo sapiens (Human).